The primary structure comprises 138 residues: Small ribosomal subunit protein uS11c (138 aa).

The tract at residues M1–R23 is disordered. Basic residues predominate over residues G9–R23.

This sequence belongs to the universal ribosomal protein uS11 family. In terms of assembly, part of the 30S ribosomal subunit.

It localises to the plastid. The protein resides in the chloroplast. The chain is Small ribosomal subunit protein uS11c from Nasturtium officinale (Watercress).